We begin with the raw amino-acid sequence, 66 residues long: DNA gyrase inhibitor YacG (66 aa).

Cysteine 9, cysteine 12, cysteine 28, and cysteine 32 together coordinate Zn(2+).

Belongs to the DNA gyrase inhibitor YacG family. Interacts with GyrB. Requires Zn(2+) as cofactor.

Its function is as follows. Inhibits all the catalytic activities of DNA gyrase by preventing its interaction with DNA. Acts by binding directly to the C-terminal domain of GyrB, which probably disrupts DNA binding by the gyrase. The chain is DNA gyrase inhibitor YacG from Pseudomonas fluorescens (strain SBW25).